The primary structure comprises 207 residues: Cytochrome c biogenesis ATP-binding export protein CcmA (207 aa).

The ABC transporter domain maps to 4 to 207 (LEARELLCER…RISLTQTRAA (204 aa)). Position 36–43 (36–43 (GSNGAGKT)) interacts with ATP.

It belongs to the ABC transporter superfamily. CcmA exporter (TC 3.A.1.107) family. The complex is composed of two ATP-binding proteins (CcmA) and two transmembrane proteins (CcmB).

It localises to the cell inner membrane. The catalysed reaction is heme b(in) + ATP + H2O = heme b(out) + ADP + phosphate + H(+). Its function is as follows. Part of the ABC transporter complex CcmAB involved in the biogenesis of c-type cytochromes; once thought to export heme, this seems not to be the case, but its exact role is uncertain. Responsible for energy coupling to the transport system. The sequence is that of Cytochrome c biogenesis ATP-binding export protein CcmA from Shigella sonnei (strain Ss046).